Consider the following 298-residue polypeptide: Glyoxalase domain-containing protein 4 (298 aa).

In terms of domain architecture, VOC 1 spans 5 to 130; the sequence is RALHFVFKVK…GGYKFYLQDR (126 aa). K109 is modified (N6-succinyllysine). At S131 the chain carries Phosphoserine. The 122-residue stretch at 137 to 258 folds into the VOC 2 domain; the sequence is PVLKVTLAVS…DGHEICFVGD (122 aa). K273 is subject to N6-succinyllysine.

This sequence belongs to the glyoxalase I family. As to quaternary structure, interacts with NUDT9.

The protein localises to the mitochondrion. The chain is Glyoxalase domain-containing protein 4 (Glod4) from Mus musculus (Mouse).